A 552-amino-acid polypeptide reads, in one-letter code: C-type lectin receptor-like tyrosine-protein kinase At1g52310 (552 aa).

Positions Met-1 to Leu-27 are cleaved as a signal peptide. Over Asp-28–Tyr-201 the chain is Extracellular. 9 N-linked (GlcNAc...) asparagine glycosylation sites follow: Asn-37, Asn-59, Asn-69, Asn-106, Asn-118, Asn-137, Asn-154, Asn-169, and Asn-180. A C-type lectin domain is found at Asn-59–Ala-188. Cystine bridges form between Cys-80-Cys-187 and Cys-164-Cys-179. A helical transmembrane segment spans residues Leu-202–Trp-222. Over Leu-223–Lys-552 the chain is Cytoplasmic. A Protein kinase domain is found at Ser-268–Val-546. Residues Ala-274–Thr-282 and Lys-296 contribute to the ATP site. The Proton acceptor role is filled by Asp-394.

This sequence belongs to the protein kinase superfamily. Tyr protein kinase family.

The protein resides in the cell membrane. It catalyses the reaction L-tyrosyl-[protein] + ATP = O-phospho-L-tyrosyl-[protein] + ADP + H(+). The sequence is that of C-type lectin receptor-like tyrosine-protein kinase At1g52310 from Arabidopsis thaliana (Mouse-ear cress).